The primary structure comprises 348 residues: Fasciculation and elongation protein zeta-2 (348 aa).

A disordered region spans residues 11-40; that stretch reads YEFQEPAGSVQEQENCNASPEAGAGAHAGG. A phosphoserine mark is found at Ser130, Ser171, and Ser190. Positions 206–280 form a coiled coil; it reads ERVKRLSVSE…TAKKKKKLKS (75 aa). The interval 265–296 is disordered; sequence QKEHKETAKKKKKLKSGSSQNGRSERSHMPGT.

It belongs to the zygin family. In terms of assembly, homodimer; disulfide-linked. May form heterodimers with FEZ1. Interacts with synaptotagmin.

Functionally, involved in axonal outgrowth and fasciculation. This is Fasciculation and elongation protein zeta-2 (Fez2) from Mus musculus (Mouse).